Consider the following 64-residue polypeptide: Prokaryotic ubiquitin-like protein UBact (64 aa).

The segment at 1 to 64 is disordered; that stretch reads MFNGEEVILF…SERYRQRTGE (64 aa). The segment covering 22-64 has biased composition (basic and acidic residues); the sequence is REIHKDAPAPKRPETKKTGDRLMDRMKKVDPNQSERYRQRTGE. Residue Glu64 forms an Isoglutamyl lysine isopeptide (Glu-Lys) (interchain with K-? in acceptor proteins) linkage.

Belongs to the ubiquitin-like protein UBact family.

Its function is as follows. May function as a protein modifier covalently attached to lysine residues of substrate proteins. This may serve to target the modified proteins for degradation by proteasomes. The chain is Prokaryotic ubiquitin-like protein UBact from Leptospirillum ferriphilum (strain ML-04).